The following is a 224-amino-acid chain: Orotidine 5'-phosphate decarboxylase (224 aa).

Substrate contacts are provided by residues aspartate 10, lysine 32, 59 to 68, threonine 115, arginine 175, glutamine 184, glycine 204, and arginine 205; that span reads DLKLHDIPNT. The active-site Proton donor is the lysine 61.

The protein belongs to the OMP decarboxylase family. Type 1 subfamily. As to quaternary structure, homodimer.

The catalysed reaction is orotidine 5'-phosphate + H(+) = UMP + CO2. It participates in pyrimidine metabolism; UMP biosynthesis via de novo pathway; UMP from orotate: step 2/2. Functionally, catalyzes the decarboxylation of orotidine 5'-monophosphate (OMP) to uridine 5'-monophosphate (UMP). The polypeptide is Orotidine 5'-phosphate decarboxylase (Novosphingobium aromaticivorans (strain ATCC 700278 / DSM 12444 / CCUG 56034 / CIP 105152 / NBRC 16084 / F199)).